Reading from the N-terminus, the 262-residue chain is Cytochrome b mRNA maturase bI2 (262 aa).

It belongs to the LAGLIDADG endonuclease family.

Its subcellular location is the mitochondrion. In terms of biological role, this protein is responsible for splicing and maturation of cytochrome b mRNA. Specifically, it may be responsible for the splicing specificity of the second intron. The sequence is that of Cytochrome b mRNA maturase bI2 (bI2) from Debaryomyces hansenii (strain ATCC 36239 / CBS 767 / BCRC 21394 / JCM 1990 / NBRC 0083 / IGC 2968) (Yeast).